We begin with the raw amino-acid sequence, 301 residues long: GTPase Era (301 aa).

The region spanning 7–175 (YCGFIAIVGR…AAIVRKHLPE (169 aa)) is the Era-type G domain. Positions 15–22 (GRPNVGKS) are G1. 15–22 (GRPNVGKS) provides a ligand contact to GTP. Residues 41–45 (QTTRH) form a G2 region. The segment at 62-65 (DTPG) is G3. GTP is bound by residues 62–66 (DTPGL) and 124–127 (NKVD). The G4 stretch occupies residues 124–127 (NKVD). The G5 stretch occupies residues 154-156 (ISA). The 78-residue stretch at 206–283 (LGAELPYSVT…HLELWVKVKS (78 aa)) folds into the KH type-2 domain.

Belongs to the TRAFAC class TrmE-Era-EngA-EngB-Septin-like GTPase superfamily. Era GTPase family. As to quaternary structure, monomer.

Its subcellular location is the cytoplasm. The protein resides in the cell inner membrane. In terms of biological role, an essential GTPase that binds both GDP and GTP, with rapid nucleotide exchange. Plays a role in 16S rRNA processing and 30S ribosomal subunit biogenesis and possibly also in cell cycle regulation and energy metabolism. This chain is GTPase Era, found in Escherichia fergusonii (strain ATCC 35469 / DSM 13698 / CCUG 18766 / IAM 14443 / JCM 21226 / LMG 7866 / NBRC 102419 / NCTC 12128 / CDC 0568-73).